Reading from the N-terminus, the 209-residue chain is MLRFEDWELAVVIILTRFMEAIAIIISIYLAFNGYKLRYVLATAGVFLLSVLINLTGLIFRPYFIYFSLASIFLSALILTALILYVKKNPEKTKSFSLPENARCPVCNVLILKEDELCTAKIGNYTYYFDTCHHLVQLLKEPDYFVERGNIFKGELKEVFVKTKDTKKWKKFSEVKLVGEDGRLVAYENPPKGAKVINPEEILRESPLS.

The next 3 helical transmembrane spans lie at 10-32 (AVVI…YLAF), 37-59 (LRYV…TGLI), and 64-86 (FIYF…ILYV).

Its subcellular location is the cell membrane. This is an uncharacterized protein from Aquifex aeolicus (strain VF5).